The following is a 230-amino-acid chain: Secretory carrier-associated membrane protein 4 (230 aa).

Residues Met-1 to Arg-39 lie on the Cytoplasmic side of the membrane. The next 4 membrane-spanning stretches (helical) occupy residues Ile-40 to Ala-60, Trp-61 to Phe-81, Met-106 to Phe-126, and Val-149 to Ile-169. The Cytoplasmic segment spans residues Val-170 to Pro-230. Thr-194 carries the phosphothreonine modification. The segment at Asn-197–Pro-230 is disordered. Polar residues-rich tracts occupy residues Ala-203–Ser-212 and Pro-220–Pro-230.

It belongs to the SCAMP family.

It localises to the membrane. In terms of biological role, probably involved in membrane protein trafficking. The chain is Secretory carrier-associated membrane protein 4 (Scamp4) from Rattus norvegicus (Rat).